The primary structure comprises 254 residues: 3-deoxy-manno-octulosonate cytidylyltransferase (254 aa).

This sequence belongs to the KdsB family.

It localises to the cytoplasm. The enzyme catalyses 3-deoxy-alpha-D-manno-oct-2-ulosonate + CTP = CMP-3-deoxy-beta-D-manno-octulosonate + diphosphate. Its pathway is nucleotide-sugar biosynthesis; CMP-3-deoxy-D-manno-octulosonate biosynthesis; CMP-3-deoxy-D-manno-octulosonate from 3-deoxy-D-manno-octulosonate and CTP: step 1/1. It functions in the pathway bacterial outer membrane biogenesis; lipopolysaccharide biosynthesis. In terms of biological role, activates KDO (a required 8-carbon sugar) for incorporation into bacterial lipopolysaccharide in Gram-negative bacteria. The chain is 3-deoxy-manno-octulosonate cytidylyltransferase from Chlamydia pneumoniae (Chlamydophila pneumoniae).